An 82-amino-acid polypeptide reads, in one-letter code: Small ribosomal subunit protein bS18 (82 aa).

It belongs to the bacterial ribosomal protein bS18 family. As to quaternary structure, part of the 30S ribosomal subunit. Forms a tight heterodimer with protein bS6.

Its function is as follows. Binds as a heterodimer with protein bS6 to the central domain of the 16S rRNA, where it helps stabilize the platform of the 30S subunit. The sequence is that of Small ribosomal subunit protein bS18 from Sinorhizobium fredii (strain NBRC 101917 / NGR234).